Reading from the N-terminus, the 110-residue chain is MESRATVKVQRISARKARLVADLIRYKSANDALSILYNTNKKASALFIKLLNSAVANAINNHGMNNEKLVVEKVLVNEGPTLKRFQPRSQGRAYSIFKRTSHLEIVLKEK.

This sequence belongs to the universal ribosomal protein uL22 family. Part of the 50S ribosomal subunit.

In terms of biological role, this protein binds specifically to 23S rRNA; its binding is stimulated by other ribosomal proteins, e.g. L4, L17, and L20. It is important during the early stages of 50S assembly. It makes multiple contacts with different domains of the 23S rRNA in the assembled 50S subunit and ribosome. Functionally, the globular domain of the protein is located near the polypeptide exit tunnel on the outside of the subunit, while an extended beta-hairpin is found that lines the wall of the exit tunnel in the center of the 70S ribosome. This is Large ribosomal subunit protein uL22 from Mycoplasma mobile (strain ATCC 43663 / 163K / NCTC 11711) (Mesomycoplasma mobile).